Here is an 862-residue protein sequence, read N- to C-terminus: Semaphorin-4D (862 aa).

Positions 1 to 21 (MRMCTPIRGLLMALAVMFGTA) are cleaved as a signal peptide. Positions 22 to 500 (MAFAPIPRIT…SNSGVVQAPL (479 aa)) constitute a Sema domain. Topologically, residues 22–734 (MAFAPIPRIT…TMYLKSSDNR (713 aa)) are extracellular. N49 and N77 each carry an N-linked (GlcNAc...) asparagine glycan. Disulfide bonds link C97–C108 and C126–C135. Residues N139 and N191 are each glycosylated (N-linked (GlcNAc...) asparagine). 2 cysteine pairs are disulfide-bonded: C257/C370 and C281/C326. N329, N379, and N419 each carry an N-linked (GlcNAc...) asparagine glycan. One can recognise a PSI domain in the interval 502 to 551 (FCGKHGTCEDCVLARDPYCAWSPPTATCVALHQTESPSRGLIQEMSGDAS). Intrachain disulfides connect C503–C520, C509–C553, C512–C529, and C576–C624. The 83-residue stretch at 554 to 636 (PDKSKGSYRQ…EERVKNKTVF (83 aa)) folds into the Ig-like C2-type domain. Residues N613 and N632 are each glycosylated (N-linked (GlcNAc...) asparagine). A helical transmembrane segment spans residues 735-755 (LLMSLFLFFFVLFLCLFFYNC). Residues 756-862 (YKGYLPRQCL…KFADSDADGD (107 aa)) lie on the Cytoplasmic side of the membrane. The segment at 794–837 (VEPGSFSQQNGEHPKPALDTGYETEQDTITSKVPTDREDSQRID) is disordered. Residues 827 to 837 (PTDREDSQRID) are compositionally biased toward basic and acidic residues. S833 is subject to Phosphoserine.

This sequence belongs to the semaphorin family. Homodimer. Interacts with PLXNB2. Interacts with PLXNB1. As to expression, strongly expressed in skeletal muscle, peripheral blood lymphocytes, spleen, and thymus and also expressed at lower levels in testes, brain, kidney, small intestine, prostate, heart, placenta, lung and pancreas, but not in colon and liver.

The protein resides in the cell membrane. In terms of biological role, cell surface receptor for PLXNB1 and PLXNB2 that plays an important role in cell-cell signaling. Regulates GABAergic synapse development. Promotes the development of inhibitory synapses in a PLXNB1-dependent manner. Modulates the complexity and arborization of developing neurites in hippocampal neurons by activating PLXNB1 and interaction with PLXNB1 mediates activation of RHOA. Promotes the migration of cerebellar granule cells. Plays a role in the immune system; induces B-cells to aggregate and improves their viability (in vitro). Induces endothelial cell migration through the activation of PTK2B/PYK2, SRC, and the phosphatidylinositol 3-kinase-AKT pathway. This chain is Semaphorin-4D (SEMA4D), found in Homo sapiens (Human).